The chain runs to 404 residues: Adenylosuccinate synthetase (404 aa).

GTP is bound by residues 12-18 (GDEGKGK) and 40-42 (GHT). The active-site Proton acceptor is Asp-13. Mg(2+)-binding residues include Asp-13 and Gly-40. Residues 13–16 (DEGK), 38–41 (NAGH), Thr-121, Arg-135, Gln-213, Thr-228, and Arg-296 contribute to the IMP site. His-41 acts as the Proton donor in catalysis. 292–298 (TTTGRAR) contributes to the substrate binding site. Residues Arg-298, 324–326 (KMD), and 389–391 (SCG) each bind GTP.

This sequence belongs to the adenylosuccinate synthetase family. In terms of assembly, homodimer. The cofactor is Mg(2+).

It localises to the cytoplasm. The enzyme catalyses IMP + L-aspartate + GTP = N(6)-(1,2-dicarboxyethyl)-AMP + GDP + phosphate + 2 H(+). The protein operates within purine metabolism; AMP biosynthesis via de novo pathway; AMP from IMP: step 1/2. Functionally, plays an important role in the de novo pathway of purine nucleotide biosynthesis. Catalyzes the first committed step in the biosynthesis of AMP from IMP. The chain is Adenylosuccinate synthetase from Deinococcus geothermalis (strain DSM 11300 / CIP 105573 / AG-3a).